The primary structure comprises 472 residues: Cysteine--tRNA ligase (472 aa).

Cys-28 is a binding site for Zn(2+). The 'HIGH' region motif lies at 30–40 (PTVYNYIHIGN). Residues Cys-212, His-237, and Glu-241 each contribute to the Zn(2+) site. Positions 271–275 (KMSKS) match the 'KMSKS' region motif. Position 274 (Lys-274) interacts with ATP.

The protein belongs to the class-I aminoacyl-tRNA synthetase family. As to quaternary structure, monomer. Zn(2+) serves as cofactor.

It is found in the cytoplasm. The catalysed reaction is tRNA(Cys) + L-cysteine + ATP = L-cysteinyl-tRNA(Cys) + AMP + diphosphate. This chain is Cysteine--tRNA ligase, found in Limosilactobacillus fermentum (strain NBRC 3956 / LMG 18251) (Lactobacillus fermentum).